The sequence spans 345 residues: Nuclear distribution protein nudE-like 1 (345 aa).

Positions 28–190 (QSFQEARDEL…LAVRERQQEV (163 aa)) form a coiled coil. The self-association stretch occupies residues 56–166 (VQAEQRNRDL…LDEKESLLVS (111 aa)). The interaction with KATNB1 stretch occupies residues 64–189 (DLQADNQRLK…ELAVRERQQE (126 aa)). The segment at 114–133 (YVRELEQANDDLERAKRATI) is required for interaction with PAFAH1B1. The segment at 175-345 (RDLRQELAVR…SAPGMLPLSV (171 aa)) is interaction with CENPF. The interval 189–256 (EVTRKSAPSS…SARISALNIV (68 aa)) is interaction with YWHAE. The tract at residues 191-345 (TRKSAPSSPT…SAPGMLPLSV (155 aa)) is interaction with NEFL. The interval 195–256 (APSSPTLDCE…SARISALNIV (62 aa)) is interaction with KATNA1. Ser-215 is subject to Phosphoserine. Thr-219 carries the post-translational modification Phosphothreonine; by CDK1 and MAPK1. Ser-231 carries the post-translational modification Phosphoserine. The interval 241–280 (TSPLTPSARISALNIVGDLLRKVGALESKLAACRNFAKDQ) is interaction with DISC1. Ser-242 carries the post-translational modification Phosphoserine; by CDK1. Thr-245 carries the phosphothreonine; by CDK1 and MAPK1 modification. The required for localization to the centrosome and interaction with dynein, dynactin, tubulin gamma, PCM1 and PCNT stretch occupies residues 256–291 (VGDLLRKVGALESKLAACRNFAKDQASRKSYISGNV). Cys-273 carries the S-palmitoyl cysteine; by ZDHHC2, ZDHHC3 and ZDHHC7 lipid modification. Residues 315-345 (GAVNGFDPAPPPPGLGSSRPSSAPGMLPLSV) form a disordered region. Residues 329–339 (LGSSRPSSAPG) show a composition bias toward low complexity. Phosphoserine is present on Ser-344.

The protein belongs to the nudE family. In terms of assembly, self-associates. Interacts with DISC1, dynein, dynactin, tubulin gamma, KATNA1, KATNB1, microtubules, PAFAH1B1, PCM1, PCNT, and YWHAE. Interacts directly with NEFL and indirectly with NEFH. Interacts (via C-terminus) with CENPF. Interacts with ZNF365. Interacts with PLEKHM1 (via N- and C-terminus). Interacts with GTP-bound RAB9A; the interaction may lead to RAB9A-dynein motor tethering. Phosphorylated in mitosis. Can be phosphorylated by CDK1, CDK5 and MAPK1. Phosphorylation by CDK5 promotes interaction with KATNA1 and YWHAE. In terms of processing, palmitoylation at Cys-273 reduces affinity for dynein.

It localises to the cytoplasm. The protein localises to the cytoskeleton. Its subcellular location is the microtubule organizing center. The protein resides in the centrosome. It is found in the chromosome. It localises to the centromere. The protein localises to the kinetochore. Its subcellular location is the spindle. Its function is as follows. Required for organization of the cellular microtubule array and microtubule anchoring at the centrosome. May regulate microtubule organization at least in part by targeting the microtubule severing protein KATNA1 to the centrosome. Also positively regulates the activity of the minus-end directed microtubule motor protein dynein. May enhance dynein-mediated microtubule sliding by targeting dynein to the microtubule plus ends. Required for several dynein- and microtubule-dependent processes such as the maintenance of Golgi integrity, the centripetal motion of secretory vesicles and the coupling of the nucleus and centrosome. Also required during brain development for the migration of newly formed neurons from the ventricular/subventricular zone toward the cortical plate. Plays a role, together with DISC1, in the regulation of neurite outgrowth. Required for mitosis in some cell types but appears to be dispensible for mitosis in cortical neuronal progenitors, which instead requires NDE1. Facilitates the polymerization of neurofilaments from the individual subunits NEFH and NEFL. Positively regulates lysosome peripheral distribution and ruffled border formation in osteoclasts. Plays a role, together with DISC1, in the regulation of neurite outgrowth. May act as a RAB9A/B effector that tethers RAB9-associated late endosomes to the dynein motor for their retrograde transport to the trans-Golgi network. This is Nuclear distribution protein nudE-like 1 (NDEL1) from Pongo abelii (Sumatran orangutan).